The chain runs to 96 residues: Small ribosomal subunit protein bS6 (96 aa).

Belongs to the bacterial ribosomal protein bS6 family.

Functionally, binds together with bS18 to 16S ribosomal RNA. This Streptococcus equi subsp. equi (strain 4047) protein is Small ribosomal subunit protein bS6.